Reading from the N-terminus, the 245-residue chain is UPF0246 protein CE1889 (245 aa).

The interval M1 to L20 is disordered.

The protein belongs to the UPF0246 family.

In Corynebacterium efficiens (strain DSM 44549 / YS-314 / AJ 12310 / JCM 11189 / NBRC 100395), this protein is UPF0246 protein CE1889.